Here is a 75-residue protein sequence, read N- to C-terminus: Phi-liotoxin-Lw1a (75 aa).

A signal peptide spans 1 to 25 (MNFATKVSLLLLAIAVIVIVEGGEG). Positions 26–39 (DSWFEEHEESDTER) are excised as a propeptide. Disulfide bonds link Cys50/Cys62 and Cys56/Cys68.

Expressed by the venom gland.

Its subcellular location is the secreted. Functionally, affects the activity of both ryanodine-sensitive calcium-release channels RyR1 and RyR2 with high potency. At lower concentrations the toxin increases full openings of the RyRs, and at higher concentrations it inhibits full openings and induce openings to subconductance levels and reduces the number of full conductance openings. The different actions may be attributed to the toxins binding at different sites on the RyRs, with binding at a high-affinity site mediating the increase in full openings and the induction of subconductance states evoked upon binding to a lower-affinity site. Insect-selective toxin that provokes a dose-dependent contractile paralysis in crickets and blowfly larvae, followed by death. In Hormurus waigiensis (Australian rainforest scorpion), this protein is Phi-liotoxin-Lw1a.